Here is a 238-residue protein sequence, read N- to C-terminus: Orotidine 5'-phosphate decarboxylase (238 aa).

Residues D10, K32, 59–68 (DLKLHDIPNT), T122, R184, Q193, G213, and R214 contribute to the substrate site. The Proton donor role is filled by K61.

It belongs to the OMP decarboxylase family. Type 1 subfamily. In terms of assembly, homodimer.

The enzyme catalyses orotidine 5'-phosphate + H(+) = UMP + CO2. Its pathway is pyrimidine metabolism; UMP biosynthesis via de novo pathway; UMP from orotate: step 2/2. Catalyzes the decarboxylation of orotidine 5'-monophosphate (OMP) to uridine 5'-monophosphate (UMP). The chain is Orotidine 5'-phosphate decarboxylase from Bacillus cereus (strain AH187).